The sequence spans 213 residues: Phosphoribosyl-dephospho-CoA transferase (213 aa).

Residues D135 and D137 contribute to the active site.

Belongs to the MdcG family.

The catalysed reaction is apo-[malonate decarboxylase ACP] + 2'-(5''-triphospho-alpha-D-ribosyl)-3'-dephospho-CoA = holo-[malonate decarboxylase ACP] + diphosphate. In terms of biological role, transfers 2'-(5-triphosphoribosyl)-3'-dephosphocoenzyme-A to the apo-[acyl-carrier-protein] of the malonate decarboxylase to yield holo-[acyl-carrier-protein]. The chain is Phosphoribosyl-dephospho-CoA transferase from Xanthomonas axonopodis pv. citri (strain 306).